We begin with the raw amino-acid sequence, 121 residues long: Small ribosomal subunit protein uS13 (121 aa).

Residues 96-121 form a disordered region; that stretch reads PVRGQNTKNNARTRKGKAVAIAGKKK. Residues 106-121 show a composition bias toward basic residues; that stretch reads ARTRKGKAVAIAGKKK.

The protein belongs to the universal ribosomal protein uS13 family. As to quaternary structure, part of the 30S ribosomal subunit. Forms a loose heterodimer with protein S19. Forms two bridges to the 50S subunit in the 70S ribosome.

Located at the top of the head of the 30S subunit, it contacts several helices of the 16S rRNA. In the 70S ribosome it contacts the 23S rRNA (bridge B1a) and protein L5 of the 50S subunit (bridge B1b), connecting the 2 subunits; these bridges are implicated in subunit movement. Contacts the tRNAs in the A and P-sites. The sequence is that of Small ribosomal subunit protein uS13 from Streptococcus pneumoniae serotype 4 (strain ATCC BAA-334 / TIGR4).